A 92-amino-acid chain; its full sequence is MVRSVWKGPFVEGSLLKKADVARSSGRHDVIKIWSRRSTILPQFVGLVFGVYNGQKHVPVSVNEEMVGHKFGEFSPTRTFHGHSGDKKAKKA.

The protein belongs to the universal ribosomal protein uS19 family.

Functionally, protein S19 forms a complex with S13 that binds strongly to the 16S ribosomal RNA. The chain is Small ribosomal subunit protein uS19 from Rhodopseudomonas palustris (strain BisB18).